A 161-amino-acid polypeptide reads, in one-letter code: Nucleotide-binding protein Bmul_0741/BMULJ_02519 (161 aa).

The protein belongs to the YajQ family.

Nucleotide-binding protein. The chain is Nucleotide-binding protein Bmul_0741/BMULJ_02519 from Burkholderia multivorans (strain ATCC 17616 / 249).